We begin with the raw amino-acid sequence, 191 residues long: SCO2-like protein RP031 (191 aa).

Belongs to the SCO1/2 family.

The chain is SCO2-like protein RP031 from Rickettsia prowazekii (strain Madrid E).